The chain runs to 169 residues: Putative phosphoesterase SACOL1020 (169 aa).

H34 acts as the Proton donor in catalysis. 2 consecutive short sequence motifs (HXTX) follow at residues 34–37 and 115–118; these read HVTI and HFTI. H115 (proton acceptor) is an active-site residue.

The protein belongs to the 2H phosphoesterase superfamily. YjcG family.

The protein is Putative phosphoesterase SACOL1020 of Staphylococcus aureus (strain COL).